Reading from the N-terminus, the 365-residue chain is Mannonate dehydratase 1 (365 aa).

This sequence belongs to the mannonate dehydratase family. The cofactor is Fe(2+). Requires Mn(2+) as cofactor.

It catalyses the reaction D-mannonate = 2-dehydro-3-deoxy-D-gluconate + H2O. It participates in carbohydrate metabolism; pentose and glucuronate interconversion. Functionally, catalyzes the dehydration of D-mannonate. The polypeptide is Mannonate dehydratase 1 (Bacillus licheniformis (strain ATCC 14580 / DSM 13 / JCM 2505 / CCUG 7422 / NBRC 12200 / NCIMB 9375 / NCTC 10341 / NRRL NRS-1264 / Gibson 46)).